Here is a 143-residue protein sequence, read N- to C-terminus: Large ribosomal subunit protein uL11 (143 aa).

This sequence belongs to the universal ribosomal protein uL11 family. As to quaternary structure, part of the ribosomal stalk of the 50S ribosomal subunit. Interacts with L10 and the large rRNA to form the base of the stalk. L10 forms an elongated spine to which L12 dimers bind in a sequential fashion forming a multimeric L10(L12)X complex. One or more lysine residues are methylated.

In terms of biological role, forms part of the ribosomal stalk which helps the ribosome interact with GTP-bound translation factors. The sequence is that of Large ribosomal subunit protein uL11 from Burkholderia ambifaria (strain MC40-6).